A 303-amino-acid chain; its full sequence is Caspase-7 (303 aa).

M1 bears the N-acetylmethionine mark. Residues 1–23 (MTDDQDCAAELEKVDSSSEDGVD) constitute a propeptide that is removed on maturation. Positions 1-26 (MTDDQDCAAELEKVDSSSEDGVDAKP) are disordered. The span at 10–26 (ELEKVDSSSEDGVDAKP) shows a compositional bias: basic and acidic residues. S30 is modified (phosphoserine). Residues 38 to 41 (KKKR) form an exosite region. A loop L1 region spans residues 76–87 (KNFDKATGMDVR). H144 is a catalytic residue. T173 carries the post-translational modification Phosphothreonine. C186 is a catalytic residue. A loop L2 region spans residues 187-196 (RGTELDDGIQ). A propeptide spanning residues 199–206 (SGPINDID) is cleaved from the precursor. The interval 226–238 (VPGYYSWRNPGKG) is loop L3. At S239 the chain carries Phosphoserine. The tract at residues 274 to 288 (ESQSDDPRFNEKKQI) is loop L4.

This sequence belongs to the peptidase C14A family. In terms of assembly, heterotetramer that consists of two anti-parallel arranged heterodimers, each one formed by a 20 kDa (p20) and a 11 kDa (p11) subunit. Interacts with XIAP (via its second BIR domain); inhibiting CASP7 activity. Interacts with BIRC6/bruce. Interacts with ATXN3 (short isoform 1). Interacts with HSPA5. Post-translationally, cleavage by different proteases, such as granzyme B (GZMB), caspase-1 (CASP1), caspase-8 (CASP8) or caspase-9 (CASP9) generate the two active subunits. Its involvement in different programmed cell death processes is probably specified by the protease that activates CASP7. Cleaved and activated by initiator caspases (CASP8 and/or CASP9), leading to execution phase of apoptosis. Cleavage and maturation by GZMB regulates granzyme-mediated programmed cell death. Cleaved and activated by CASP1 in response to bacterial infection. Propeptide domains can also be cleaved efficiently by CASP3. Active heterodimers between the small subunit of caspase-7 and the large subunit of CASP3, and vice versa, also occur. Also cleaved at the N-terminus at alternative sites by CAPN1, leading to its activation. In terms of processing, phosphorylation at Ser-30 and Ser-239 by PAK2 inhibits its activity. Phosphorylation at Ser-30 prevents cleavage and activation by initiator caspase CASP9, while phosphorylation at Ser-239 prevents thiol protease activity by preventing substrate-binding. Ubiquitinated by BIRC6; this activity is inhibited by DIABLO/SMAC. Highly expressed in heart, lung, liver and kidney. Low levels in spleen, skeletal muscle and testis. No expression in the brain.

It is found in the cytoplasm. Its subcellular location is the cytosol. The protein localises to the nucleus. It localises to the secreted. The protein resides in the extracellular space. It carries out the reaction Strict requirement for an Asp residue at position P1 and has a preferred cleavage sequence of Asp-Glu-Val-Asp-|-.. With respect to regulation, during activation, the N-terminal disordered prodomain is removed by cleavage. Concomitantly, double cleavage gives rise to a large Caspase-7 subunit p20 and a small Caspase-7 subunit p11. The two large and two small subunits then assemble to form the active CASP7 complex. Can be cleaved and activated by different caspases, depending on the context. Cleaved and activated by initiator caspases (CASP8 and/or CASP9), leading to execution phase of apoptosis. Cleavage and maturation by GZMB regulates granzyme-mediated programmed cell death. Cleavage and maturation by CASP1 regulates pyroptosis. Inhibited by XIAP, which directly binds to the active site pocket and obstructs substrate entry. Phosphorylation at Ser-30 and Ser-239 by PAK2 inhibits its activity. Inhibited by BIRC6; following inhibition of BIRC6-caspase binding by DIABLO/SMAC, BIRC6 is subjected to caspase cleavage, leading to an increase in active caspases. Its function is as follows. Thiol protease involved in different programmed cell death processes, such as apoptosis, pyroptosis or granzyme-mediated programmed cell death, by proteolytically cleaving target proteins. Has a marked preference for Asp-Glu-Val-Asp (DEVD) consensus sequences, with some plasticity for alternate non-canonical sequences. Its involvement in the different programmed cell death processes is probably determined by upstream proteases that activate CASP7. Acts as an effector caspase involved in the execution phase of apoptosis: following cleavage and activation by initiator caspases (CASP8 and/or CASP9), mediates execution of apoptosis by catalyzing cleavage of proteins, such as CLSPN, PARP1, PTGES3 and YY1. Compared to CASP3, acts as a minor executioner caspase and cleaves a limited set of target proteins. Acts as a key regulator of the inflammatory response in response to bacterial infection by catalyzing cleavage and activation of the sphingomyelin phosphodiesterase SMPD1 in the extracellular milieu, thereby promoting membrane repair. Regulates pyroptosis in intestinal epithelial cells: cleaved and activated by CASP1 in response to S.typhimurium infection, promoting its secretion to the extracellular milieu, where it catalyzes activation of SMPD1, generating ceramides that repair membranes and counteract the action of gasdermin-D (GSDMD) pores. Regulates granzyme-mediated programmed cell death in hepatocytes: cleaved and activated by granzyme B (GZMB) in response to bacterial infection, promoting its secretion to the extracellular milieu, where it catalyzes activation of SMPD1, generating ceramides that repair membranes and counteract the action of perforin (PRF1) pores. Following cleavage by CASP1 in response to inflammasome activation, catalyzes processing and inactivation of PARP1, alleviating the transcription repressor activity of PARP1. Acts as an inhibitor of type I interferon production during virus-induced apoptosis by mediating cleavage of antiviral proteins CGAS, IRF3 and MAVS, thereby preventing cytokine overproduction. Cleaves and activates sterol regulatory element binding proteins (SREBPs). Cleaves phospholipid scramblase proteins XKR4, XKR8 and XKR9. Cleaves BIRC6 following inhibition of BIRC6-caspase binding by DIABLO/SMAC. In Mus musculus (Mouse), this protein is Caspase-7.